A 337-amino-acid chain; its full sequence is WAT1-related protein At1g11460 (337 aa).

Transmembrane regions (helical) follow at residues 14–34, 46–66, 83–103, 107–127, 139–159, 188–208, 220–240, 254–274, 284–304, and 309–329; these read WPPI…NALV, IIGA…AYIL, FISG…GLSY, TVAC…ALIL, AGMI…FLTF, WLLG…WILF, FSST…LSLY, FVIG…TVSV, VFVS…DFII, and LYLG…VFLW. An EamA 1 domain is found at 27–157; it reads MGSVNALVKK…IICISGALFL (131 aa). Residues 220–328 enclose the EamA 2 domain; the sequence is FSSTCLMSIF…GTITGLYVFL (109 aa).

Belongs to the drug/metabolite transporter (DMT) superfamily. Plant drug/metabolite exporter (P-DME) (TC 2.A.7.4) family.

It is found in the membrane. This chain is WAT1-related protein At1g11460, found in Arabidopsis thaliana (Mouse-ear cress).